The sequence spans 172 residues: Large ribosomal subunit protein uL10 (172 aa).

This sequence belongs to the universal ribosomal protein uL10 family. Part of the ribosomal stalk of the 50S ribosomal subunit. The N-terminus interacts with L11 and the large rRNA to form the base of the stalk. The C-terminus forms an elongated spine to which L12 dimers bind in a sequential fashion forming a multimeric L10(L12)X complex.

Functionally, forms part of the ribosomal stalk, playing a central role in the interaction of the ribosome with GTP-bound translation factors. The sequence is that of Large ribosomal subunit protein uL10 from Mesorhizobium japonicum (strain LMG 29417 / CECT 9101 / MAFF 303099) (Mesorhizobium loti (strain MAFF 303099)).